Reading from the N-terminus, the 199-residue chain is Regulator of G-protein signaling 16 (199 aa).

S-palmitoyl cysteine attachment occurs at residues cysteine 2 and cysteine 12. Residues 64-180 form the RGS domain; sequence SFQSLLNSKN…LKSPAYRDLA (117 aa). Phosphotyrosine is present on residues tyrosine 167 and tyrosine 176.

Interacts with GNAI1 and GNAQ. Interacts with GNAI3, GNAI3 and GNAO1. Palmitoylated on Cys-2 and/or Cys-12. In terms of processing, phosphorylated. Phosphorylation at Tyr-167 by EGFR enhances GTPase accelerating (GAP) activity toward GNAI1. As to expression, predominantly found in the retina. Some expression has been found in the liver.

It localises to the membrane. Functionally, regulates G protein-coupled receptor signaling cascades. Inhibits signal transduction by increasing the GTPase activity of G protein alpha subunits, thereby driving them into their inactive GDP-bound form. Plays an important role in the phototransduction cascade by regulating the lifetime and effective concentration of activated transducin alpha. May regulate extra and intracellular mitogenic signals. The protein is Regulator of G-protein signaling 16 (Rgs16) of Rattus norvegicus (Rat).